The chain runs to 280 residues: Protein YIP4b (280 aa).

Polar residues predominate over residues 1 to 15; that stretch reads MSHNDTIPLYQSSQS. Residues 1–106 form a disordered region; sequence MSHNDTIPLY…SGFGSPPNTL (106 aa). Residues 1 to 146 lie on the Cytoplasmic side of the membrane; it reads MSHNDTIPLY…DPGKALRDWD (146 aa). A helical transmembrane segment spans residues 147–167; it reads LWGPFFFIVFLGLTLSWSASV. At 168–171 the chain is on the lumenal side; it reads KKSE. A run of 2 helical transmembrane segments spans residues 172-192 and 193-213; these read VFAV…LNVL and LLGG…CLFP. Topologically, residues 214–230 are lumenal; the sequence is LDVGAVICMLKDNVILK. The helical transmembrane segment at 231–251 threads the bilayer; that stretch reads MVVVSVTLAWSSWAAYPFMSA. Topologically, residues 252–258 are cytoplasmic; that stretch reads AVNPRRK. A helical membrane pass occupies residues 259-279; sequence ALALYPVFLMYVSVGFLIIAI. Position 280 (asparagine 280) is a topological domain, lumenal.

It belongs to the YIP1 family. As to quaternary structure, homodimer and heterodimer with YIP4A. Component of a trans-Golgi network (TGN)-localized ECH/YIP4 complex made of ECH, YIP4A and YIP4B. Interacts directly with ECH. As to expression, expressed in developing root hair cells.

The protein resides in the golgi apparatus. It localises to the trans-Golgi network membrane. Its function is as follows. Together with YIP4A, involved in the regulation of cell elongation during root and hypocotyl growth. YIP4A and YIP4B are central trafficking components in Rho-of-plant (ROPs, e.g. ARAC4/ROP2, ARAC5/ROP4 and ARAC3/ROP6) small GTPases-dependent root hair formation, thus contributing to activation and plasma membrane accumulation of ROPs during hair initiation. The ECH/YIP4 complex is involved in the modulation of the trans-Golgi network (TGN)-mediated trafficking of some proteins and cell wall components (e.g. pectin and hemicellulose) to the cell wall in dark-grown hypocotyls and in secretory cells of the seed coat. This Arabidopsis thaliana (Mouse-ear cress) protein is Protein YIP4b.